We begin with the raw amino-acid sequence, 251 residues long: Phosphosulfolactate synthase (251 aa).

Belongs to the phosphosulfolactate synthase family. Homotrimer. Mg(2+) serves as cofactor.

It carries out the reaction (2R)-O-phospho-3-sulfolactate = phosphoenolpyruvate + sulfite + H(+). It participates in cofactor biosynthesis; coenzyme M biosynthesis; sulfoacetaldehyde from phosphoenolpyruvate and sulfite: step 1/4. In terms of biological role, catalyzes the addition of sulfite to phosphoenolpyruvate (PEP) to yield (2R)-phospho-3-sulfolactate (PSL). The chain is Phosphosulfolactate synthase (comA) from Methanocaldococcus jannaschii (strain ATCC 43067 / DSM 2661 / JAL-1 / JCM 10045 / NBRC 100440) (Methanococcus jannaschii).